A 485-amino-acid chain; its full sequence is NADH-quinone oxidoreductase subunit N (485 aa).

Transmembrane regions (helical) follow at residues 8 to 28, 35 to 55, 71 to 91, 105 to 125, 127 to 147, 159 to 179, 203 to 223, 235 to 255, 271 to 291, 297 to 317, 326 to 346, 373 to 393, 408 to 430, and 455 to 475; these read LIAL…MLSI, FLNA…LWFV, GFAM…CTFA, FYLL…ANHL, SLFL…GYAF, YTIL…LVYA, LLAG…LVPF, PAPV…GVVM, VVLA…ALSQ, LLGY…IALQ, VGVY…VVSL, AAVM…LGFI, WWLV…RVAV, and IVVL…QPLI.

The protein belongs to the complex I subunit 2 family. NDH-1 is composed of 13 different subunits. Subunits NuoA, H, J, K, L, M, N constitute the membrane sector of the complex.

It is found in the cell inner membrane. The catalysed reaction is a quinone + NADH + 5 H(+)(in) = a quinol + NAD(+) + 4 H(+)(out). In terms of biological role, NDH-1 shuttles electrons from NADH, via FMN and iron-sulfur (Fe-S) centers, to quinones in the respiratory chain. The immediate electron acceptor for the enzyme in this species is believed to be ubiquinone. Couples the redox reaction to proton translocation (for every two electrons transferred, four hydrogen ions are translocated across the cytoplasmic membrane), and thus conserves the redox energy in a proton gradient. This is NADH-quinone oxidoreductase subunit N from Escherichia coli O139:H28 (strain E24377A / ETEC).